The following is a 91-amino-acid chain: Large ribosomal subunit protein bL31B (91 aa).

Belongs to the bacterial ribosomal protein bL31 family. Type B subfamily. As to quaternary structure, part of the 50S ribosomal subunit.

The sequence is that of Large ribosomal subunit protein bL31B from Neisseria meningitidis serogroup A / serotype 4A (strain DSM 15465 / Z2491).